The following is a 236-amino-acid chain: MAQAGRTGYDNREIVMKYIHYKLSQRGYEWDVGDVDAAPLGAAPTPGIFSFQPESNPTPAVHRDMAARTSPLRPIVATTGPTLSPVPPVVHLTLRRAGDDFSRRYRRDFAEMSSQLHLTPFTARGRFATVVEELFRDGVNWGRIVAFFEFGGVMCVESVNREMSPLVDNIALWMTEYLNRHLHTWIQDNGGWDAFVELYGPTMQPLFDFSWLSLKALLSLALVGACITLGAYLGHK.

The BH4 signature appears at 10-30 (DNREIVMKYIHYKLSQRGYEW). Thr69 carries the post-translational modification Phosphothreonine; by MAPK8. Ser70 carries the phosphoserine; by MAPK8 and PKC modification. At Ser84 the chain carries Phosphoserine; by MAPK8. The BH3 motif lies at 90 to 104 (VHLTLRRAGDDFSRR). Positions 133-152 (ELFRDGVNWGRIVAFFEFGG) match the BH1 motif. Positions 184 to 199 (TWIQDNGGWDAFVELY) match the BH2 motif. The helical transmembrane segment at 209-230 (FSWLSLKALLSLALVGACITLG) threads the bilayer.

The protein belongs to the Bcl-2 family. In terms of assembly, forms homodimers, and heterodimers with BAX, BAD, BAK and Bcl-X(L). Heterodimerization with BAX requires intact BH1 and BH2 motifs, and is necessary for anti-apoptotic activity. Component of the complex, at least composed of LRPPRC, BECN1 and BCL2; the interactions prevent BECN1 from forming an autophagy-inducing complex with PIK3C3. Interacts with EI24. Also interacts with APAF1, BBC3, BCL2L1, BNIPL, MRPL41 and TP53BP2. Binding to FKBP8 seems to target BCL2 to the mitochondria and probably interferes with the binding of BCL2 to its targets. Interacts with BAG1 in an ATP-dependent manner. Interacts with RAF1 (the 'Ser-338' and 'Ser-339' phosphorylated form). Interacts (via the BH4 domain) with EGLN3; the interaction prevents the formation of the BAX-BCL2 complex and inhibits the anti-apoptotic activity of BCL2. Interacts with G0S2; this interaction also prevents the formation of the anti-apoptotic BAX-BCL2 complex. Interacts with RTL10/BOP. Interacts with the SCF(FBXO10) complex. Interacts (via the loop between motifs BH4 and BH3) with NLRP1 (via LRR repeats), but not with NLRP2, NLRP3, NLRP4, PYCARD, nor MEFV. Interacts with GIMAP3/IAN4, GIMAP4/IAN1 and GIMAP5/IAN5. Interacts with BCAP31. Interacts with IRF3; the interaction is inhibited by Sendai virus infection. Interacts with BECN1; thereby inhibiting autophagy in non-starvation conditions. Interacts with AMBRA1; thereby inhibiting autophagy. In terms of processing, phosphorylation/dephosphorylation on Ser-70 regulates anti-apoptotic activity. Growth factor-stimulated phosphorylation on Ser-70 by PKC is required for the anti-apoptosis activity and occurs during the G2/M phase of the cell cycle. In the absence of growth factors, BCL2 appears to be phosphorylated by other protein kinases such as ERKs and stress-activated kinases. Phosphorylated by MAPK8/JNK1 at Thr-69, Ser-70 and Ser-84, which stimulates starvation-induced autophagy. Dephosphorylated by protein phosphatase 2A (PP2A). Proteolytically cleaved by caspases during apoptosis. The cleaved protein, lacking the BH4 motif, has pro-apoptotic activity, causes the release of cytochrome c into the cytosol promoting further caspase activity. Post-translationally, monoubiquitinated by PRKN, leading to an increase in its stability. Ubiquitinated by SCF(FBXO10), leading to its degradation by the proteasome.

The protein localises to the mitochondrion outer membrane. The protein resides in the nucleus membrane. It is found in the endoplasmic reticulum membrane. It localises to the cytoplasm. Suppresses apoptosis in a variety of cell systems including factor-dependent lymphohematopoietic and neural cells. Regulates cell death by controlling the mitochondrial membrane permeability. Appears to function in a feedback loop system with caspases. Inhibits caspase activity either by preventing the release of cytochrome c from the mitochondria and/or by binding to the apoptosis-activating factor (APAF-1). Also acts as an inhibitor of autophagy: interacts with BECN1 and AMBRA1 during non-starvation conditions and inhibits their autophagy function. May attenuate inflammation by impairing NLRP1-inflammasome activation, hence CASP1 activation and IL1B release. The sequence is that of Apoptosis regulator Bcl-2 (BCL2) from Canis lupus familiaris (Dog).